Consider the following 597-residue polypeptide: Bromodomain-containing protein 9 (597 aa).

A compositionally biased stretch (basic residues) spans 1-10 (MGKKHKKHKA). Disordered stretches follow at residues 1–25 (MGKK…KPLE) and 38–138 (EVTE…ENES). 2 stretches are compositionally biased toward basic and acidic residues: residues 11–25 (EWRS…KPLE) and 50–62 (SYYD…ERER). Phosphoserine is present on serine 56. Residues 63–73 (HKEKKKKKKKK) show a composition bias toward basic residues. A compositionally biased stretch (basic and acidic residues) spans 74-85 (SEKEKHLDDEER). The segment covering 86–97 (RKRKEEKKRKRE) has biased composition (basic residues). Basic and acidic residues predominate over residues 111-126 (DPGKKVEVEPPPDRPV). The region spanning 136–240 (NESTPIQQLL…HAGFKMMSKQ (105 aa)) is the Bromo domain. A histone H4K5ac H4K8ac and histone H4K5bu H4K8bu binding region spans residues 214 to 216 (TYN). Lysine 373 carries the post-translational modification N6-acetyllysine; alternate. Lysine 373 participates in a covalent cross-link: Glycyl lysine isopeptide (Lys-Gly) (interchain with G-Cter in SUMO2); alternate. Residues 536 to 597 (EAQAERGGSR…SPEPAASAKT (62 aa)) form a disordered region. Residues 544–556 (SRPSSNLSSLSNA) are compositionally biased toward low complexity. Phosphoserine occurs at positions 566 and 588.

Binds acetylated histones H3 and H4. Binds butyrylated histone H4. Component of the multiprotein chromatin-remodeling subcomplex SWI/SNF called GBAF, which includes at least BICRA or BICRAL (mutually exclusive), BRD9, SS18, the core BAF subunits, SMARCA2/BRM, SMARCA4/BRG1/BAF190A, ACTL6A/BAF53, SMARCC1/BAF155, and SMARCD1/BAF60A. Interacts (via N-terminal bromodomain) with acetylated RAD54. Interacts (via C-terminus) with RAD51.

Its subcellular location is the nucleus. Plays a role in chromatin remodeling and regulation of transcription. Acts as a chromatin reader that recognizes and binds acylated histones: binds histones that are acetylated and/or butyrylated. Component of SWI/SNF chromatin remodeling subcomplex GBAF that carries out key enzymatic activities, changing chromatin structure by altering DNA-histone contacts within a nucleosome in an ATP-dependent manner. Also orchestrates the RAD51-RAD54 complex formation and thereby plays a role in homologous recombination (HR). This Homo sapiens (Human) protein is Bromodomain-containing protein 9 (BRD9).